A 28-amino-acid polypeptide reads, in one-letter code: Dermaseptin-2.2TR (28 aa).

As to expression, expressed by the skin glands.

It localises to the secreted. In terms of biological role, has antimicrobial activity. The sequence is that of Dermaseptin-2.2TR from Phyllomedusa trinitatis (Trinidad leaf frog).